Here is a 264-residue protein sequence, read N- to C-terminus: Thymidylate synthase (264 aa).

DUMP is bound by residues arginine 21 and 126–127 (RR). The active-site Nucleophile is the cysteine 146. DUMP contacts are provided by residues 166–169 (RSAD), asparagine 177, and 207–209 (HLY). Aspartate 169 contributes to the (6R)-5,10-methylene-5,6,7,8-tetrahydrofolate binding site. Alanine 263 is a binding site for (6R)-5,10-methylene-5,6,7,8-tetrahydrofolate.

Belongs to the thymidylate synthase family. Bacterial-type ThyA subfamily. Homodimer.

The protein resides in the cytoplasm. It catalyses the reaction dUMP + (6R)-5,10-methylene-5,6,7,8-tetrahydrofolate = 7,8-dihydrofolate + dTMP. Its pathway is pyrimidine metabolism; dTTP biosynthesis. Catalyzes the reductive methylation of 2'-deoxyuridine-5'-monophosphate (dUMP) to 2'-deoxythymidine-5'-monophosphate (dTMP) while utilizing 5,10-methylenetetrahydrofolate (mTHF) as the methyl donor and reductant in the reaction, yielding dihydrofolate (DHF) as a by-product. This enzymatic reaction provides an intracellular de novo source of dTMP, an essential precursor for DNA biosynthesis. The protein is Thymidylate synthase of Rhodopseudomonas palustris (strain ATCC BAA-98 / CGA009).